Reading from the N-terminus, the 786-residue chain is Diamine oxidase [copper-containing] 1, peroxisomal (786 aa).

Alanine 419 to asparagine 430 provides a ligand contact to substrate. Aspartate 421 serves as the catalytic Proton acceptor. A disulfide bond links cysteine 440 and cysteine 466. Valine 502 to tyrosine 507 serves as a coordination point for substrate. The active-site Schiff-base intermediate with substrate; via topaquinone is the tyrosine 505. Residue tyrosine 505 is modified to 2',4',5'-topaquinone. 2 residues coordinate Cu cation: histidine 555 and histidine 557. 2 residues coordinate Mn(2+): aspartate 710 and isoleucine 711. Histidine 721 contacts Cu cation.

Belongs to the copper/topaquinone oxidase family. As to quaternary structure, homodimer. It depends on Cu cation as a cofactor. The cofactor is Zn(2+). L-topaquinone is required as a cofactor. In terms of processing, topaquinone (TPQ) is generated by copper-dependent autoxidation of a specific tyrosyl residue. In terms of tissue distribution, mainly expressed in roots, and, to a lower extent, in leaves and stems.

It localises to the peroxisome. The enzyme catalyses a primary methyl amine + O2 + H2O = an aldehyde + H2O2 + NH4(+). It catalyses the reaction N-methylputrescine + O2 + H2O = 4-methylaminobutanal + H2O2 + NH4(+). Its pathway is alkaloid biosynthesis; nicotine biosynthesis. It participates in amine and polyamine degradation; putrescine degradation. Its function is as follows. Involved in putrescine catabolism in peroxisomes. May also be involved in the biosynthesis of pyridine alkaloid natural products, leading mainly to the production of anabasine, anatabine, nicotine and nornicotine, effective deterrents against herbivores with antiparasitic and pesticide properties (neurotoxins); nornicotine serves as the precursor in the synthesis of the carcinogen compound N'-nitrosonornicotine (NNN). Oxidizes preferentially non-N-methylated amines. In Nicotiana tabacum (Common tobacco), this protein is Diamine oxidase [copper-containing] 1, peroxisomal.